A 103-amino-acid polypeptide reads, in one-letter code: Preprofallaxidin-6 (103 aa).

The N-terminal stretch at 1 to 22 (MASLKKSLFLVLFLGFVSLSIC) is a signal peptide. Residues 23–49 (EEEKRENEGNENEEEDENHEEGSEEKR) constitute a propeptide that is removed on maturation. Residues 24 to 50 (EEKRENEGNENEEEDENHEEGSEEKRG) form a disordered region. Over residues 31 to 41 (GNENEEEDENH) the composition is skewed to acidic residues. The residue at position 65 (Leu65) is a Leucine amide. The segment at 67–103 (KRSEEKRYHPFGKRSEEKRYHPFGKRSEEKRYPPIGK) is disordered. Positions 69-73 (SEEKR) are excised as a propeptide. Phenylalanine amide is present on Phe77. Residues 81 to 85 (SEEKR) constitute a propeptide that is removed on maturation. A Phenylalanine amide modification is found at Phe89. A propeptide spanning residues 93 to 97 (SEEKR) is cleaved from the precursor. Ile101 carries the post-translational modification Isoleucine amide.

This sequence belongs to the frog skin active peptide (FSAP) family. Brevinin subfamily. In terms of tissue distribution, expressed by the skin glands.

The protein localises to the secreted. Functionally, fallaxidin-1.3 shows no antibacterial activity against Gram-positive or Gram-negative bacteria. Does not inhibit the formation of NO by neuronal nitric oxide synthase. Has no effect on splenocyte proliferation or smooth muscle contraction. Its function is as follows. Fallaxidin-1.4 shows no antibacterial activity against Gram-positive or Gram-negative bacteria. Does not inhibit the formation of NO by neuronal nitric oxide synthase. Has no effect on splenocyte proliferation or smooth muscle contraction. In terms of biological role, fallaxidin-3.1 shows antibacterial activity against the Gram-positive bacteria E.faecalis (MIC=100 uM) and L.lactis (MIC=100 uM). No antibacterial activity against the Gram-positive bacteria B.cereus, L.innocua, M.luteus, S.epidermidis, S.uberis and S.aureus, or the Gram-negative bacteria E.cloacae and E.coli. The sequence is that of Preprofallaxidin-6 from Litoria fallax (Eastern dwarf tree frog).